The chain runs to 158 residues: Endoribonuclease YbeY (158 aa).

His-118, His-122, and His-128 together coordinate Zn(2+).

This sequence belongs to the endoribonuclease YbeY family. Requires Zn(2+) as cofactor.

The protein localises to the cytoplasm. Its function is as follows. Single strand-specific metallo-endoribonuclease involved in late-stage 70S ribosome quality control and in maturation of the 3' terminus of the 16S rRNA. The polypeptide is Endoribonuclease YbeY (Haemophilus ducreyi (strain 35000HP / ATCC 700724)).